Here is a 512-residue protein sequence, read N- to C-terminus: Monocarboxylate transporter 10 (512 aa).

Residues 1-44 are disordered; it reads MVPSQEEPAAERETNEAQPPGPAPSDDAPLPGPGPSDVSDVAAE. Topologically, residues 1 to 63 are cytoplasmic; that stretch reads MVPSQEEPAA…AGSEPPVPPE (63 aa). A helical transmembrane segment spans residues 64 to 84; sequence GGWGWLVMLAAMWCNGSVFGI. The Extracellular portion of the chain corresponds to 85 to 111; it reads QNAYGVLFVSMLDTFKAKDDDNMAFKT. Residues 112–132 traverse the membrane as a helical segment; the sequence is AWVGSLSMGMIFFCCPIVSVF. Topologically, residues 133-141 are cytoplasmic; sequence TDMFGCRRT. A helical transmembrane segment spans residues 142–162; it reads AVVGAAVGFIGLMSSSFVSSI. Residues 163–168 are Extracellular-facing; the sequence is EPLYLT. The chain crosses the membrane as a helical span at residues 169-189; that stretch reads YGIIFACGCSFAYQPSLVILG. The Cytoplasmic portion of the chain corresponds to 190–201; the sequence is HYFKKRLGLVNG. The chain crosses the membrane as a helical span at residues 202–222; that stretch reads IVTAGSSVFTILLPLLLGNLI. The Extracellular segment spans residues 223 to 232; that stretch reads SSVKLFNTLR. A helical transmembrane segment spans residues 233 to 253; sequence ILCIFMFVLFLAGFTYRPLVP. At 254 to 291 the chain is on the cytoplasmic side; it reads STKEKESGGSRSSFFSRRKLSPPKKVFNFALFKETTYA. S260 carries the phosphoserine modification. The chain crosses the membrane as a helical span at residues 292–312; it reads VWAAGIPLALFGYFVPYVHLM. Residues 313–326 lie on the Extracellular side of the membrane; the sequence is NHVKERFQDVNNKE. A helical transmembrane segment spans residues 327 to 347; that stretch reads VLFMCIGITSGVGRLLFGRIA. Topologically, residues 348–362 are cytoplasmic; the sequence is DYLPGVKKVYLQVLS. A helical transmembrane segment spans residues 363–383; it reads FFFIGLMSMMIPLCSAFGALI. A384 is a topological domain (extracellular). The chain crosses the membrane as a helical span at residues 385–405; the sequence is VCLAMGLFDGCFISIMAPIAF. Residues 406-416 are Cytoplasmic-facing; the sequence is ELVGPQDASQA. The chain crosses the membrane as a helical span at residues 417-437; sequence IGFLLGFMSIPMTVGPPIAGL. Residues 438–448 are Extracellular-facing; it reads LHDKLGTYDVA. The helical transmembrane segment at 449–469 threads the bilayer; that stretch reads FYLAGIPPFVGGVVLCLIPWI. At 470 to 512 the chain is on the cytoplasmic side; that stretch reads HSKKQRKISKNAGGEKMEKMLENQSSLLSGSSGIFKKDSASII. 4 positions are modified to phosphoserine: S495, S498, S500, and S501.

It belongs to the major facilitator superfamily. Monocarboxylate porter (TC 2.A.1.13) family. In terms of processing, not N-glycosylated. Highly expressed in small intestine, particularly in jejunum and ileum, scarcely in colon and substantially in kidney, liver and skeletal muscle. In the brain expression is low and appears to be restricted to a subset of neurons, microglia cells, and oligodendrocytes.

It is found in the cell membrane. The protein resides in the basolateral cell membrane. The catalysed reaction is L-tryptophan(in) = L-tryptophan(out). The enzyme catalyses L-tyrosine(in) = L-tyrosine(out). It carries out the reaction L-phenylalanine(in) = L-phenylalanine(out). It catalyses the reaction 3,3',5-triiodo-L-thyronine(out) = 3,3',5-triiodo-L-thyronine(in). The catalysed reaction is L-thyroxine(out) = L-thyroxine(in). Functionally, sodium- and proton-independent thyroid hormones and aromatic acids transporter. Mediates both uptake and efflux of 3,5,3'-triiodothyronine (T3) and 3,5,3',5'-tetraiodothyronine (T4) with high affinity, suggesting a role in the homeostasis of thyroid hormone levels. Responsible for low affinity bidirectional transport of the aromatic amino acids, such as phenylalanine, tyrosine, tryptophan and L-3,4-dihydroxyphenylalanine (L-dopa). Plays an important role in homeostasis of aromatic amino acids. In Mus musculus (Mouse), this protein is Monocarboxylate transporter 10 (Slc16a10).